We begin with the raw amino-acid sequence, 537 residues long: 4-coumarate--CoA ligase (537 aa).

Residues Ser189, Ser190, Gly191, Thr192, Thr193, and Lys197 each coordinate ATP. Residues Tyr239 and Ser243 each coordinate (E)-4-coumaroyl-AMP. Lys260 is a CoA binding site. Positions Asn262–Gln331 are SBD1. Residues Ala309, Gln331, Gly332, Thr336, and Met344 each coordinate (E)-4-coumaroyl-AMP. 3 residues coordinate ATP: Gln331, Gly332, and Thr336. The segment at Gly332 to Tyr399 is SBD2. ATP contacts are provided by Asp420 and Arg435. Positions 437 and 441 each coordinate (E)-4-coumaroyl-AMP. CoA-binding residues include Lys443 and Gly444. Lys524 serves as a coordination point for ATP.

It belongs to the ATP-dependent AMP-binding enzyme family. The cofactor is Mg(2+).

It carries out the reaction (E)-4-coumarate + ATP + CoA = (E)-4-coumaroyl-CoA + AMP + diphosphate. The catalysed reaction is (E)-4-coumarate + ATP + H(+) = (E)-4-coumaroyl-AMP + diphosphate. It catalyses the reaction (E)-4-coumaroyl-AMP + CoA = (E)-4-coumaroyl-CoA + AMP + H(+). The protein operates within phytoalexin biosynthesis; 3,4',5-trihydroxystilbene biosynthesis; 3,4',5-trihydroxystilbene from trans-4-coumarate: step 1/2. Its function is as follows. Carboxylate--CoA ligase that may use 4-coumarate as substrate. Follows a two-step reaction mechanism, wherein the carboxylate substrate first undergoes adenylation by ATP, followed by a thioesterification in the presence of CoA to yield the final CoA thioester. The chain is 4-coumarate--CoA ligase (4CL) from Pinus taeda (Loblolly pine).